A 24-amino-acid polypeptide reads, in one-letter code: Large ribosomal subunit protein uL10 (24 aa).

This sequence belongs to the universal ribosomal protein uL10 family. Part of the ribosomal stalk of the 50S ribosomal subunit. The N-terminus interacts with L11 and the large rRNA to form the base of the stalk. The C-terminus forms an elongated spine to which L12 dimers bind in a sequential fashion forming a multimeric L10(L12)X complex.

In terms of biological role, forms part of the ribosomal stalk, playing a central role in the interaction of the ribosome with GTP-bound translation factors. This Enterobacter cloacae protein is Large ribosomal subunit protein uL10 (rplJ).